A 58-amino-acid polypeptide reads, in one-letter code: SEVKMDAEFRHDSGYEVHHQKLVFFAEDVGSNKGAIIGLMVGGVVIATVIVITLVMLK.

Residues 1-33 are Extracellular-facing; it reads SEVKMDAEFRHDSGYEVHHQKLVFFAEDVGSNK. 4 residues coordinate Cu(2+): His-11, Tyr-15, His-18, and His-19. The Zn(2+) site is built by His-11, Tyr-15, His-18, and His-19. Residues 34 to 57 form a helical membrane-spanning segment; that stretch reads GAIIGLMVGGVVIATVIVITLVML. Residue Lys-58 is a topological domain, cytoplasmic.

The protein belongs to the APP family. As to quaternary structure, binds, via its C-terminus, to the PID domain of several cytoplasmic proteins, including APBB family members, the APBA family, MAPK8IP1, SHC1 and NUMB and DAB1. Binding to DAB1 inhibits its serine phosphorylation. Interacts (via NPXY motif) with DAB2 (via PID domain); the interaction is impaired by tyrosine phosphorylation of the NPXY motif. Also interacts with GPCR-like protein BPP, APPBP1, IB1, KNS2 (via its TPR domains), APPBP2 (via BaSS) and DDB1. In vitro, it binds MAPT via the MT-binding domains. Associates with microtubules in the presence of ATP and in a kinesin-dependent manner. Interacts, through a C-terminal domain, with GNAO1. Interacts with CPEB1, ANKS1B and AGER. Interacts with ITM2B. Interacts with ITM2C. Interacts with IDE. Can form homodimers; dimerization is enhanced in the presence of Cu(2+) ions. Can form homodimers; this is promoted by heparin binding. Interacts with SORL1 (via N-terminal ectodomain); this interaction retains APP in the trans-Golgi network and reduces processing into soluble APP-alpha and amyloid-beta peptides. Interacts with PLD3. Interacts with VDAC1. Interacts with NSG1; could regulate APP processing. Amyloid-beta protein 42 interacts with FPR2. Interacts with LRRK2. Interacts (via cytoplasmic domain) with KIF5B. Interacts (via C-terminus) with APBB2/FE65L1 (via C-terminus). Interacts (via intracellular domain) with APBB3. In terms of processing, proteolytically processed under normal cellular conditions. Cleavage either by alpha-secretase, beta-secretase or theta-secretase leads to generation and extracellular release of soluble APP peptides, S-APP-alpha and S-APP-beta, and the retention of corresponding membrane-anchored C-terminal fragments, C80, C83 and C99. Subsequent processing of C80 and C83 by gamma-secretase yields P3 peptides. This is the major secretory pathway and is non-amyloidogenic. Alternatively, presenilin/nicastrin-mediated gamma-secretase processing of C99 releases the amyloid-beta proteins, amyloid-beta protein 40 and amyloid-beta protein 42, major components of amyloid plaques, and the cytotoxic C-terminal fragments, gamma-CTF(50), gamma-CTF(57) and gamma-CTF(59). PSEN1 cleavage is more efficient with C83 than with C99 as substrate (in vitro). Amyloid-beta protein 40 and Amyloid-beta protein 42 are cleaved by ACE. Many other minor amyloid-beta peptides, amyloid-beta 1-X peptides, are found in cerebral spinal fluid (CSF) including the amyloid-beta X-15 peptides, produced from the cleavage by alpha-secretase.

Its subcellular location is the cell membrane. It is found in the membrane. It localises to the perikaryon. The protein resides in the cell projection. The protein localises to the growth cone. Its subcellular location is the clathrin-coated pit. It is found in the early endosome. It localises to the cytoplasmic vesicle. The protein resides in the secreted. The protein localises to the cell surface. Its subcellular location is the nucleus. It is found in the cytoplasm. In terms of biological role, functions as a cell surface receptor and performs physiological functions on the surface of neurons relevant to neurite growth, neuronal adhesion and axonogenesis. Interaction between APP molecules on neighboring cells promotes synaptogenesis. Involved in cell mobility and transcription regulation through protein-protein interactions. Can promote transcription activation through binding to APBB1-KAT5 and inhibit Notch signaling through interaction with Numb. Couples to apoptosis-inducing pathways such as those mediated by G(o) and JIP. Inhibits G(o)-alpha ATPase activity. Acts as a kinesin I membrane receptor, mediating the axonal transport of beta-secretase and presenilin 1. By acting as a kinesin I membrane receptor, plays a role in axonal anterograde transport of cargo towards synapses in axons. May be involved in copper homeostasis/oxidative stress through copper ion reduction. In vitro, copper-metallated APP induces neuronal death directly or is potentiated through Cu(2+)-mediated low-density lipoprotein oxidation. Can regulate neurite outgrowth through binding to components of the extracellular matrix such as heparin and collagen I and IV. Induces a AGER-dependent pathway that involves activation of p38 MAPK, resulting in internalization of amyloid-beta peptide and mitochondrial dysfunction in cultured cortical neurons. Provides Cu(2+) ions for GPC1 which are required for release of nitric oxide (NO) and subsequent degradation of the heparan sulfate chains on GPC1. This Ovis aries (Sheep) protein is Amyloid-beta precursor protein (APP).